A 319-amino-acid polypeptide reads, in one-letter code: Ribonuclease Z (319 aa).

Zn(2+) contacts are provided by histidine 62, histidine 64, aspartate 66, histidine 67, histidine 139, aspartate 210, and histidine 268. Aspartate 66 serves as the catalytic Proton acceptor.

The protein belongs to the RNase Z family. Homodimer. Requires Zn(2+) as cofactor.

It catalyses the reaction Endonucleolytic cleavage of RNA, removing extra 3' nucleotides from tRNA precursor, generating 3' termini of tRNAs. A 3'-hydroxy group is left at the tRNA terminus and a 5'-phosphoryl group is left at the trailer molecule.. Functionally, zinc phosphodiesterase, which displays some tRNA 3'-processing endonuclease activity. Probably involved in tRNA maturation, by removing a 3'-trailer from precursor tRNA. The chain is Ribonuclease Z from Nostoc punctiforme (strain ATCC 29133 / PCC 73102).